The chain runs to 258 residues: Diacetyl reductase [(S)-acetoin forming] (258 aa).

8-32 (LVTGGAQGIGFKIAERLVEDGFKVA) serves as a coordination point for NAD(+). S141 contributes to the substrate binding site. The Proton acceptor role is filled by Y154. The active site involves K158.

The protein belongs to the short-chain dehydrogenases/reductases (SDR) family.

The catalysed reaction is (S)-acetoin + NAD(+) = diacetyl + NADH + H(+). Catalyzes the irreversible reduction of 2,3-butanediol to (S)-acetoin in the presence of NADH. The sequence is that of Diacetyl reductase [(S)-acetoin forming] (butA) from Staphylococcus aureus (strain Mu50 / ATCC 700699).